Here is an 85-residue protein sequence, read N- to C-terminus: Small ribosomal subunit protein uS17 (85 aa).

Belongs to the universal ribosomal protein uS17 family. As to quaternary structure, part of the 30S ribosomal subunit.

Functionally, one of the primary rRNA binding proteins, it binds specifically to the 5'-end of 16S ribosomal RNA. The polypeptide is Small ribosomal subunit protein uS17 (Mycoplasma genitalium (strain ATCC 33530 / DSM 19775 / NCTC 10195 / G37) (Mycoplasmoides genitalium)).